The primary structure comprises 332 residues: Holliday junction branch migration complex subunit RuvB (332 aa).

The large ATPase domain (RuvB-L) stretch occupies residues 1-181 (MERIISELEM…FGVSHKMEYY (181 aa)). The ATP site is built by Leu20, Arg21, Gly62, Lys65, Thr66, Thr67, Arg171, Tyr181, and Arg218. Residue Thr66 participates in Mg(2+) binding. A small ATPAse domain (RuvB-S) region spans residues 182-252 (NENEIKSIII…SAKNALDMLG (71 aa)). The tract at residues 255-332 (SNGLDDLDRN…QHFKKVEVKI (78 aa)) is head domain (RuvB-H). Residues Arg291, Arg310, and Arg315 each contribute to the DNA site.

The protein belongs to the RuvB family. In terms of assembly, homohexamer. Forms an RuvA(8)-RuvB(12)-Holliday junction (HJ) complex. HJ DNA is sandwiched between 2 RuvA tetramers; dsDNA enters through RuvA and exits via RuvB. An RuvB hexamer assembles on each DNA strand where it exits the tetramer. Each RuvB hexamer is contacted by two RuvA subunits (via domain III) on 2 adjacent RuvB subunits; this complex drives branch migration. In the full resolvosome a probable DNA-RuvA(4)-RuvB(12)-RuvC(2) complex forms which resolves the HJ.

It is found in the cytoplasm. It carries out the reaction ATP + H2O = ADP + phosphate + H(+). Functionally, the RuvA-RuvB-RuvC complex processes Holliday junction (HJ) DNA during genetic recombination and DNA repair, while the RuvA-RuvB complex plays an important role in the rescue of blocked DNA replication forks via replication fork reversal (RFR). RuvA specifically binds to HJ cruciform DNA, conferring on it an open structure. The RuvB hexamer acts as an ATP-dependent pump, pulling dsDNA into and through the RuvAB complex. RuvB forms 2 homohexamers on either side of HJ DNA bound by 1 or 2 RuvA tetramers; 4 subunits per hexamer contact DNA at a time. Coordinated motions by a converter formed by DNA-disengaged RuvB subunits stimulates ATP hydrolysis and nucleotide exchange. Immobilization of the converter enables RuvB to convert the ATP-contained energy into a lever motion, pulling 2 nucleotides of DNA out of the RuvA tetramer per ATP hydrolyzed, thus driving DNA branch migration. The RuvB motors rotate together with the DNA substrate, which together with the progressing nucleotide cycle form the mechanistic basis for DNA recombination by continuous HJ branch migration. Branch migration allows RuvC to scan DNA until it finds its consensus sequence, where it cleaves and resolves cruciform DNA. In Fusobacterium nucleatum subsp. nucleatum (strain ATCC 25586 / DSM 15643 / BCRC 10681 / CIP 101130 / JCM 8532 / KCTC 2640 / LMG 13131 / VPI 4355), this protein is Holliday junction branch migration complex subunit RuvB.